The following is a 338-amino-acid chain: UPF0324 membrane protein NMA0465 (338 aa).

Helical transmembrane passes span proline 5–leucine 23, histidine 33–phenylalanine 55, glycine 62–phenylalanine 84, alanine 94–tyrosine 116, leucine 123–valine 145, valine 155–tryptophan 177, isoleucine 222–threonine 239, isoleucine 254–leucine 273, leucine 280–alanine 302, and proline 312–isoleucine 334.

Belongs to the UPF0324 family.

The protein resides in the cell membrane. This is UPF0324 membrane protein NMA0465 from Neisseria meningitidis serogroup A / serotype 4A (strain DSM 15465 / Z2491).